Reading from the N-terminus, the 380-residue chain is Transcription factor SOX-7 (380 aa).

The interval 24-43 is disordered; the sequence is SDGLSPPAVPRPSGDKSSES. Residues 45–113 constitute a DNA-binding region (HMG box); it reads IRRPMNAFMV…QHMQDYPNYK (69 aa). The segment at 139–167 is disordered; the sequence is SRDQNTLPEKNGIGRGEKEDRGEYSPGAT. In terms of domain architecture, Sox C-terminal spans 260–380; that stretch reads VSMMSSVSGC…ATYYNSYSVS (121 aa). Residues 323 to 328 are required for beta-catenin-binding; sequence EFDQYL.

Interacts with CTNNB1/beta-catenin; this interaction may lead to the proteasomal degradation of active CTNNB1 and thus inhibition of Wnt/beta-catenin-stimulated transcription. In terms of tissue distribution, predominantly expressed in ovary, lung and heart. In the ovary, restricted to oocytes (at protein level). Present both in mesenchymal and epithelial cells in some adult tissues, including ear.

It localises to the nucleus. The protein resides in the cytoplasm. Functionally, binds to and activates the CDH5 promoter, hence plays a role in the transcriptional regulation of genes expressed in the hemogenic endothelium and blocks further differentiation into blood precursors. May be required for the survival of both hematopoietic and endothelial precursors during specification. May play a role in skeletal myogenesis and up-regulate the expression of muscle markers, such as PAX3/PAX7 and Meox1. Competes with GATA4 for binding and activation of the FGF3 promoter. Represses Wnt/beta-catenin-stimulated transcription. Probably acts by targeting CTNNB1 to proteasomal degradation. Binds the DNA sequence 5'-AACAAT-3'. The polypeptide is Transcription factor SOX-7 (Sox7) (Mus musculus (Mouse)).